A 745-amino-acid polypeptide reads, in one-letter code: Protein PHOX1 (745 aa).

Over residues 1-10 (MGKPTGKKKN) the composition is skewed to basic residues. The disordered stretch occupies residues 1-37 (MGKPTGKKKNNNYTEMPPTESSTTGGGKTGKSFDRSA). TPR repeat units follow at residues 52 to 85 (ALELKEEGNKLFQKRDYEGAMFRYDKAVKLLPRD), 90 to 125 (AYLRTSMASCYMQMGLGEYPNAINECNLALEASPRF), and 126 to 159 (SKALLKRARCYEALNKLDFAFRDSRVVLNMEPEN). Positions 280–359 (TRTVKLVHGD…GSFRLYIAEV (80 aa)) constitute a PB1 domain. TPR repeat units follow at residues 406–441 (EHWIFQFAQLFKNHVGFDSDSYLELHNLGMKLYTEA), 443–472 (EDIVTGEDAQELFDIAADKFQEMAALAMFN), 494–528 (ETILEKVEAGFEWAKNEYNKAAEKYEGAVKIKSDF), and 553–586 (GEVDIESDASQDVLKLYNKAEESMEKGMQIWEEM).

As to quaternary structure, interacts with myosin XI-1 and XI-K.

It is found in the cytoplasmic vesicle membrane. Its function is as follows. Carboxylate clamp type tetratricopeptide repeat protein that may act as a potential Hsp90/Hsp70 co-chaperone. Contributes to polar growth of root hairs. The sequence is that of Protein PHOX1 from Arabidopsis thaliana (Mouse-ear cress).